Here is a 133-residue protein sequence, read N- to C-terminus: Secreted effector protein SteB (133 aa).

Its subcellular location is the secreted. The protein localises to the host cytoplasm. Functionally, effector proteins function to alter host cell physiology and promote bacterial survival in host tissues. The polypeptide is Secreted effector protein SteB (steB) (Salmonella typhimurium (strain 14028s / SGSC 2262)).